Consider the following 458-residue polypeptide: MKEKALSIVILAAGKGTRMYSDLPKVLHKIAGKPMVKHVIDTVKSIHAKNIHLVYGHGGEVMQTRLQDEPVNWVLQAEQLGTGHAMQQAAPFFADDENILMLYGDGPLITAETLQTLIAAKPEHGIALLTVVLDDPTGYGRIVRENGNVVAIVEQKDANAEQLKIQEINTGLLVADGKSLKKWLSQLTNNNAQGEYYITDVIALANQDGCQVVAVQASDFMEVEGVNNRQQLARLERYYQRKQADNLLLAGVALADPERFDLRGELSHGKDVEIDVNVIIEGKVSLGHRVKIGAGCVLKNCQIGDDVEIKPYSVLEEAIVGQAAQIGPFSRLRPGTALADNTHIGNFVEIKKAHIGTGSKVNHLSYVGDAEVGMQCNIGAGVITCNYDGANKFKTIIGDNVFVGSDVQLVAPVTIETGATIGAGTTVTKDVACDELVISRVPQRHIQGWQRPTKQTKK.

Positions 1–229 (MKEKALSIVI…FMEVEGVNNR (229 aa)) are pyrophosphorylase. UDP-N-acetyl-alpha-D-glucosamine-binding positions include 11-14 (LAAG), Lys25, Gln76, 81-82 (GT), 103-105 (YGD), Gly140, Glu154, Asn169, and Asn227. Mg(2+) is bound at residue Asp105. Residue Asn227 coordinates Mg(2+). The interval 230-250 (QQLARLERYYQRKQADNLLLA) is linker. The segment at 251–458 (GVALADPERF…WQRPTKQTKK (208 aa)) is N-acetyltransferase. 2 residues coordinate UDP-N-acetyl-alpha-D-glucosamine: Arg333 and Lys351. His363 (proton acceptor) is an active-site residue. Residues Tyr366 and Asn377 each coordinate UDP-N-acetyl-alpha-D-glucosamine. Acetyl-CoA is bound by residues Ala380, 386-387 (NY), Ser405, Ala423, and Arg440.

This sequence in the N-terminal section; belongs to the N-acetylglucosamine-1-phosphate uridyltransferase family. It in the C-terminal section; belongs to the transferase hexapeptide repeat family. Homotrimer. Mg(2+) is required as a cofactor.

It is found in the cytoplasm. The enzyme catalyses alpha-D-glucosamine 1-phosphate + acetyl-CoA = N-acetyl-alpha-D-glucosamine 1-phosphate + CoA + H(+). It carries out the reaction N-acetyl-alpha-D-glucosamine 1-phosphate + UTP + H(+) = UDP-N-acetyl-alpha-D-glucosamine + diphosphate. The protein operates within nucleotide-sugar biosynthesis; UDP-N-acetyl-alpha-D-glucosamine biosynthesis; N-acetyl-alpha-D-glucosamine 1-phosphate from alpha-D-glucosamine 6-phosphate (route II): step 2/2. It functions in the pathway nucleotide-sugar biosynthesis; UDP-N-acetyl-alpha-D-glucosamine biosynthesis; UDP-N-acetyl-alpha-D-glucosamine from N-acetyl-alpha-D-glucosamine 1-phosphate: step 1/1. Its pathway is bacterial outer membrane biogenesis; LPS lipid A biosynthesis. Catalyzes the last two sequential reactions in the de novo biosynthetic pathway for UDP-N-acetylglucosamine (UDP-GlcNAc). The C-terminal domain catalyzes the transfer of acetyl group from acetyl coenzyme A to glucosamine-1-phosphate (GlcN-1-P) to produce N-acetylglucosamine-1-phosphate (GlcNAc-1-P), which is converted into UDP-GlcNAc by the transfer of uridine 5-monophosphate (from uridine 5-triphosphate), a reaction catalyzed by the N-terminal domain. This is Bifunctional protein GlmU from Pasteurella multocida (strain Pm70).